Consider the following 265-residue polypeptide: Hydroxyethylthiazole kinase (265 aa).

Methionine 43 lines the substrate pocket. The ATP site is built by lysine 118 and threonine 165. Position 192 (glycine 192) interacts with substrate.

This sequence belongs to the Thz kinase family. Mg(2+) serves as cofactor.

The catalysed reaction is 5-(2-hydroxyethyl)-4-methylthiazole + ATP = 4-methyl-5-(2-phosphooxyethyl)-thiazole + ADP + H(+). It functions in the pathway cofactor biosynthesis; thiamine diphosphate biosynthesis; 4-methyl-5-(2-phosphoethyl)-thiazole from 5-(2-hydroxyethyl)-4-methylthiazole: step 1/1. Functionally, catalyzes the phosphorylation of the hydroxyl group of 4-methyl-5-beta-hydroxyethylthiazole (THZ). This Pyrococcus furiosus (strain ATCC 43587 / DSM 3638 / JCM 8422 / Vc1) protein is Hydroxyethylthiazole kinase.